Here is a 400-residue protein sequence, read N- to C-terminus: Hyaluronidase (400 aa).

An N-terminal signal peptide occupies residues 1 to 19 (MQTILVLTTFLSAWFLAVG). Intrachain disulfides connect Cys31-Cys319, Cys196-Cys209, Cys344-Cys355, Cys349-Cys384, and Cys386-Cys395. Glu120 functions as the Proton donor in the catalytic mechanism. N-linked (GlcNAc...) asparagine glycosylation is found at Asn129 and Asn166. N-linked (GlcNAc...) asparagine glycosylation is found at Asn243 and Asn275. The EGF-like domain maps to 340 to 396 (NVARCSKQACSGRGRCTWPKDTSVIAWKFLVEKEDYDFYLGDIECKCVEGYEGRYCE).

It belongs to the glycosyl hydrolase 56 family. Monomer. Expressed by the venom gland.

The protein localises to the secreted. The catalysed reaction is Random hydrolysis of (1-&gt;4)-linkages between N-acetyl-beta-D-glucosamine and D-glucuronate residues in hyaluronate.. In terms of biological role, spider venom endo-hyaluronidase that is able to degrade purified hyaluronic acid (HA) and chondroitin sulfate (CS). Has no activity on dermatan sulfate (DS) and heparan sulfate (HS). Also increases the dermonecrotic effect of the dermonecrotic toxin (AC P0CE80), when injected in rabbit skin, supporting the hypothesis that venom hyaluronidases are spreading factors. The protein is Hyaluronidase of Loxosceles intermedia (Brown spider).